Here is a 1571-residue protein sequence, read N- to C-terminus: Neurexin-3 (1571 aa).

An N-terminal signal peptide occupies residues 1-27 (MSFTLHSVFFTLKVSIFLGSLVGLCLG). The 175-residue stretch at 28-202 (LEFMGLPNQW…SVQLEAEGPC (175 aa)) folds into the Laminin G-like 1 domain. Topologically, residues 28–1496 (LEFMGLPNQW…EVIRESSSTT (1469 aa)) are extracellular. N-linked (GlcNAc...) asparagine glycans are attached at residues Asn-58 and Asn-105. Residues 198–235 (AEGPCGERPCENGGICFLLDGHPTCDCSTTGYGGTLCS) enclose the EGF-like 1 domain. Cystine bridges form between Cys-202–Cys-213, Cys-207–Cys-222, and Cys-224–Cys-234. 2 Laminin G-like domains span residues 258–440 (VATF…VFKC) and 447–639 (DPIN…KSSC). Positions 304, 321, and 374 each coordinate Ca(2+). 5 disulfide bridges follow: Cys-404–Cys-440, Cys-610–Cys-639, Cys-647–Cys-658, Cys-652–Cys-667, and Cys-669–Cys-679. The EGF-like 2 domain maps to 643-680 (SAKQCDSYPCKNNAVCKDGWNRFICDCTGTGYWGRTCE). Laminin G-like domains are found at residues 685 to 857 (ILSY…IDYC) and 871 to 1046 (DPVT…ERGC). Asp-732 and Leu-749 together coordinate Ca(2+). Residue Asn-757 is glycosylated (N-linked (GlcNAc...) asparagine). Arg-807 lines the Ca(2+) pocket. 4 disulfides stabilise this stretch: Cys-1018-Cys-1046, Cys-1053-Cys-1064, Cys-1058-Cys-1073, and Cys-1075-Cys-1085. The EGF-like 3 domain occupies 1049–1086 (PSTTCQEDSCANQGVCMQQWEGFTCDCSMTSYSGNQCN). Positions 1090 to 1290 (ATYIFGKSGG…NPNIKINGSV (201 aa)) constitute a Laminin G-like 6 domain. Positions 1142 and 1159 each coordinate Ca(2+). N-linked (GlcNAc...) asparagine glycosylation occurs at Asn-1189. Ca(2+) is bound by residues Ile-1241 and Asn-1243. Asn-1287 and Asn-1331 each carry an N-linked (GlcNAc...) asparagine glycan. Positions 1324 to 1348 (ATTTTRKNRSTASIQPTSDDLVSSA) are disordered. The segment covering 1333–1348 (STASIQPTSDDLVSSA) has biased composition (polar residues). Residue Ser-1347 is glycosylated (O-linked (Xyl...) (heparan sulfate) serine). A helical transmembrane segment spans residues 1497-1517 (GMVVGIVAAAALCILILLYAM). Topologically, residues 1518–1571 (YKYRNRDEGSYQVDETRNYISNSAQSNGTLMKEKQASSKSGHKKQKNKDKEYYV) are cytoplasmic. The segment at 1539–1571 (NSAQSNGTLMKEKQASSKSGHKKQKNKDKEYYV) is disordered.

It belongs to the neurexin family. In terms of assembly, the laminin G-like domain 2 binds to NXPH1. Specific isoforms bind to alpha-dystroglycan. The cytoplasmic C-terminal region binds to CASK. Specific isoforms bind neuroligins NLGN1, NLGN2 and NLGN3. Interacts with CLSTN3. Post-translationally, O-glycosylated; contains heparan sulfate. Heparan sulfate attachment is required for synapse development by mediating interactions with neuroligins. Brain and arteries (at protein level).

The protein resides in the presynaptic cell membrane. Its function is as follows. Neuronal cell surface protein that may be involved in cell recognition and cell adhesion. May mediate intracellular signaling. The protein is Neurexin-3 (Nrxn3) of Mus musculus (Mouse).